Consider the following 523-residue polypeptide: Cytochrome P450 52-N1 (523 aa).

The chain crosses the membrane as a helical span at residues 5–25 (AVLGAFAAFLLYMDVLYPFVI). Residue C469 participates in heme binding.

It belongs to the cytochrome P450 family. Heme serves as cofactor.

It is found in the membrane. It carries out the reaction an omega-methyl-long-chain fatty acid + reduced [NADPH--hemoprotein reductase] + O2 = an omega-hydroxy-long-chain fatty acid + oxidized [NADPH--hemoprotein reductase] + H2O + H(+). The enzyme catalyses (9Z,12Z)-octadecadienoate + reduced [NADPH--hemoprotein reductase] + O2 = 18-hydroxy-(9Z,12Z)-octadecadienoate + oxidized [NADPH--hemoprotein reductase] + H2O + H(+). The catalysed reaction is (9Z)-octadecenoate + reduced [NADPH--hemoprotein reductase] + O2 = 18-hydroxy-(9Z)-octadecenoate + oxidized [NADPH--hemoprotein reductase] + H2O + H(+). It catalyses the reaction hexadecanoate + reduced [NADPH--hemoprotein reductase] + O2 = 16-hydroxyhexadecanoate + oxidized [NADPH--hemoprotein reductase] + H2O + H(+). It carries out the reaction (9Z)-hexadecenoate + reduced [NADPH--hemoprotein reductase] + O2 = (9Z)-16-hydroxyhexadec-9-enoate + oxidized [NADPH--hemoprotein reductase] + H2O + H(+). The enzyme catalyses octadecanoate + reduced [NADPH--hemoprotein reductase] + O2 = 18-hydroxyoctadecanoate + oxidized [NADPH--hemoprotein reductase] + H2O + H(+). Catalyzes the terminal (at the omega-position) hydroxylation of a fatty acid. Probably involved in alkane metabolism. Linoleic acid is the preferred substrate, but it acts on various other C-16, C-18 and C-20 saturated and unsaturated fatty acids, namely palmitic, palmitoleic, stearic, oleic, alpha-linoleic, arachidonic and myristic acid. The chain is Cytochrome P450 52-N1 from Starmerella bombicola (Yeast).